We begin with the raw amino-acid sequence, 312 residues long: Protein atonal (312 aa).

Disordered regions lie at residues 136–174 and 220–248; these read SNVG…TAAA and NDGS…GKQI. Positions 162-174 are enriched in low complexity; sequence PSTTATSTPTAAA. One can recognise a bHLH domain in the interval 255–307; the sequence is KRRLAANARERRRMQNLNQAFDRLRQYLPCLGNDRQLSKHETLQMAQTYISAL.

As to quaternary structure, efficient DNA binding requires dimerization with another bHLH protein. Forms a heterodimer with Daughterless. As to expression, proneural clusters and sense organ precursors of the chordotonal organs, optic furrow of the eye-antennal disk and developing brain lobe.

The protein localises to the nucleus. Functionally, developmental protein involved in neurogenesis. Required for the formation of chordotonal organs and photoreceptors. Seems to bind to E boxes. Specifically required for the photoreceptor R8 selection. This Drosophila melanogaster (Fruit fly) protein is Protein atonal (ato).